We begin with the raw amino-acid sequence, 325 residues long: Biotin synthase (325 aa).

A Radical SAM core domain is found at 49 to 278 (FNGNIVDLCS…KASIRLAGGR (230 aa)). [4Fe-4S] cluster is bound by residues Cys67, Cys71, and Cys74. [2Fe-2S] cluster is bound by residues Ser111, Cys143, Cys203, and Arg273.

The protein belongs to the radical SAM superfamily. Biotin synthase family. Homodimer. It depends on [4Fe-4S] cluster as a cofactor. [2Fe-2S] cluster serves as cofactor.

The enzyme catalyses (4R,5S)-dethiobiotin + (sulfur carrier)-SH + 2 reduced [2Fe-2S]-[ferredoxin] + 2 S-adenosyl-L-methionine = (sulfur carrier)-H + biotin + 2 5'-deoxyadenosine + 2 L-methionine + 2 oxidized [2Fe-2S]-[ferredoxin]. Its pathway is cofactor biosynthesis; biotin biosynthesis; biotin from 7,8-diaminononanoate: step 2/2. Catalyzes the conversion of dethiobiotin (DTB) to biotin by the insertion of a sulfur atom into dethiobiotin via a radical-based mechanism. The polypeptide is Biotin synthase (Clostridium tetani (strain Massachusetts / E88)).